The following is an 85-amino-acid chain: Large ribosomal subunit protein bL27 (85 aa).

The tract at residues 1–21 (MAHKKAGGSSRNGRDSEAKRL) is disordered.

It belongs to the bacterial ribosomal protein bL27 family.

The sequence is that of Large ribosomal subunit protein bL27 from Aeromonas hydrophila subsp. hydrophila (strain ATCC 7966 / DSM 30187 / BCRC 13018 / CCUG 14551 / JCM 1027 / KCTC 2358 / NCIMB 9240 / NCTC 8049).